The following is a 378-amino-acid chain: Lactosylceramide 1,3-N-acetyl-beta-D-glucosaminyltransferase (378 aa).

The Cytoplasmic segment spans residues 1–14 (MRMLVSGRRVKKWQ). Residues 15–35 (LIIQLFATCFLASLMFFWEPI) form a helical; Signal-anchor for type II membrane protein membrane-spanning segment. Residues 36–378 (DNHIVSHMKS…DTYPCRAAFI (343 aa)) are Lumenal-facing. Asn-59 carries an N-linked (GlcNAc...) asparagine glycan.

The protein belongs to the glycosyltransferase 31 family. Widely expressed. Highly expressed in lung, colon, placenta, testis, pituitary gland and cerebellum. Weakly expressed in brain, liver, spleen, lymph node and thymus.

The protein resides in the golgi apparatus membrane. It catalyses the reaction a beta-D-Gal-(1-&gt;4)-beta-D-Glc-(1&lt;-&gt;1)-Cer(d18:1(4E)) + UDP-N-acetyl-alpha-D-glucosamine = a beta-D-GlcNAc-(1-&gt;3)-beta-D-Gal-(1-&gt;4)-beta-D-Glc-(1&lt;-&gt;1)-Cer(d18:1(4E)) + UDP + H(+). The catalysed reaction is a neolactoside nLc4Cer(d18:1(4E)) + UDP-N-acetyl-alpha-D-glucosamine = a neolactoside IV(3)-beta-GlcNAc-nLc4Cer(d18:1(4E)) + UDP + H(+). It participates in protein modification; protein glycosylation. Its function is as follows. Beta-1,3-N-acetylglucosaminyltransferase that plays a key role in the synthesis of lacto- or neolacto-series carbohydrate chains on glycolipids, notably by participating in biosynthesis of HNK-1 and Lewis X carbohydrate structures. Has strong activity toward lactosylceramide (LacCer) and neolactotetraosylceramide (nLc(4)Cer; paragloboside), resulting in the synthesis of Lc(3)Cer and neolactopentaosylceramide (nLc(5)Cer), respectively. Probably plays a central role in regulating neolacto-series glycolipid synthesis during embryonic development. The polypeptide is Lactosylceramide 1,3-N-acetyl-beta-D-glucosaminyltransferase (Homo sapiens (Human)).